The primary structure comprises 341 residues: Fructose-1,6-bisphosphatase, cytosolic (341 aa).

Positions 71, 100, 121, 123, and 124 each coordinate Mg(2+). Substrate is bound by residues 124 to 127, Asn215, Tyr247, Tyr267, and Lys277; that span reads DGSS. Glu283 is a binding site for Mg(2+).

The protein belongs to the FBPase class 1 family. Mg(2+) serves as cofactor.

It localises to the cytoplasm. The protein localises to the nucleus. The enzyme catalyses beta-D-fructose 1,6-bisphosphate + H2O = beta-D-fructose 6-phosphate + phosphate. Functionally, catalyzes the first irreversible reaction from fructose-1,6-bisphosphate to fructose-6-phosphate and inorganic phosphate and plays an important regulatory role in sucrose biosynthesis and metabolism. Its activity is essential to regulate starch levels. Functions in fructose-mediated signaling independently of its catalytic activity in sugar metabolism. May act downstream of ABA2/GIN1, which is involved in abscisic acid (ABA) synthesis to regulate autotrophic transition and modulate early seedling establishment after seed germination. This is Fructose-1,6-bisphosphatase, cytosolic from Arabidopsis thaliana (Mouse-ear cress).